Consider the following 921-residue polypeptide: Isoleucine--tRNA ligase (921 aa).

The 'HIGH' region signature appears at 57–67 (PYANGDIHMGH). Glu552 is a binding site for L-isoleucyl-5'-AMP. The short motif at 593–597 (KMSKS) is the 'KMSKS' region element. Lys596 contacts ATP. Positions 888, 891, 908, and 911 each coordinate Zn(2+).

This sequence belongs to the class-I aminoacyl-tRNA synthetase family. IleS type 1 subfamily. Monomer. Zn(2+) serves as cofactor.

The protein localises to the cytoplasm. The catalysed reaction is tRNA(Ile) + L-isoleucine + ATP = L-isoleucyl-tRNA(Ile) + AMP + diphosphate. Catalyzes the attachment of isoleucine to tRNA(Ile). As IleRS can inadvertently accommodate and process structurally similar amino acids such as valine, to avoid such errors it has two additional distinct tRNA(Ile)-dependent editing activities. One activity is designated as 'pretransfer' editing and involves the hydrolysis of activated Val-AMP. The other activity is designated 'posttransfer' editing and involves deacylation of mischarged Val-tRNA(Ile). In Bacillus mycoides (strain KBAB4) (Bacillus weihenstephanensis), this protein is Isoleucine--tRNA ligase.